Here is an 88-residue protein sequence, read N- to C-terminus: UPF0250 protein bbp_432 (88 aa).

This sequence belongs to the UPF0250 family.

The protein is UPF0250 protein bbp_432 of Buchnera aphidicola subsp. Baizongia pistaciae (strain Bp).